A 431-amino-acid chain; its full sequence is Transmembrane protease serine 11C (431 aa).

Residues 1–33 (MARGQPRRSEEQWTALQNRTECKTKIKLTRCGK) lie on the Cytoplasmic side of the membrane. Residues 34 to 54 (ITLGILTAVLAAVLIGLIAYF) traverse the membrane as a helical; Signal-anchor for type II membrane protein segment. The Extracellular segment spans residues 55–431 (AACGKDSFYY…RDWITSKTGL (377 aa)). One can recognise an SEA domain in the interval 60–177 (DSFYYHVSFK…SSFKFSDIAM (118 aa)). Asn99 carries an N-linked (GlcNAc...) asparagine glycan. One can recognise a Peptidase S1 domain in the interval 200-430 (VAGGQDAEEG…YRDWITSKTG (231 aa)). Cys225 and Cys241 form a disulfide bridge. The active-site Charge relay system is the His240. N-linked (GlcNAc...) asparagine glycosylation is present at Asn276. The active-site Charge relay system is Asp285. Asn347 is a glycosylation site (N-linked (GlcNAc...) asparagine). 2 cysteine pairs are disulfide-bonded: Cys350–Cys366 and Cys377–Cys406. Residue Ser381 is the Charge relay system of the active site.

It belongs to the peptidase S1 family. Post-translationally, proteolytically cleaved via an autocatalytic mechanism. As to expression, expressed specifically in Purkinje neurons of the cerebellum (at protein level). Also detected in spinal cord.

It localises to the cell membrane. The protein localises to the cell projection. It is found in the dendrite. Its subcellular location is the perikaryon. In terms of biological role, serine protease which has a preference for Arg or Lys in position P1 and uncharged residues in positions P2 and P3. Shows specificity towards FGF2 in vitro. This Mus musculus (Mouse) protein is Transmembrane protease serine 11C.